Here is a 693-residue protein sequence, read N- to C-terminus: MADVFESLELLFDRPNEPLITPKGENNSVFQLTEQFLTEDYANNGIELNNRFGDDASEKIPLKNLSKLPEFKIATQLPKDAEFSLFLPKHQEMANELLGVLMDVPENELQDLLSTCAFARVNLNPQLFNYCYSVALMHRRDTRKVRVKNFAEVFPSKFLDSQVFTQARETAAVIPPDVPRIPIIIPRDYTATDLEEEHRLAYWREDIGINLHHYHWHLVYPFTANDLSIVAKDRRGELFFYMHQQVIARFNCERLCNSLKRVKKFSNWREPIPEAYFPKLDSLTSSRGWPPRQSGMQWQDLNRAAEGLFVTIDEMERWRRNVEEAIATGTVRLPNGQTRPLDIDTLGNMLESSALSPNRELYGSIHNNGHSFTAYMHDPEHRYLEQFGVIADEATTMRDPFFYRWHAYIDDVFQKHKESAYVRPYTRSELENPGVQVRSVSVETPGGQPNTLNTFWMLSDVNLSRGLDFSDNGPVYARFTHLNYRHFSYRINVNNTGSSRRTTVRIFITPKFDERNVPWIFSDQRKMCIEMDRFVTVLNAGENNIVRQSTESSITIPFEQTFRDLSAQGNDPRRDELATFNYCGCGWPQHMLVPKGTEAGMPFQLFVMLSNYDLDRIDQDDGKQLTCVEASSFCGLKDKKYPDRRAMGFPFDRPSSSATSLQDFILPNMGLQDITIQLQNVTEPNPRNPPMSV.

Positions 1-51 (MADVFESLELLFDRPNEPLITPKGENNSVFQLTEQFLTEDYANNGIELNNR) are excised as a propeptide. N26 and N64 each carry an N-linked (GlcNAc...) asparagine glycan. Residues H213, H217, and H243 each coordinate Cu cation. E351 acts as the Proton acceptor in catalysis. Residues H366, H370, and H406 each coordinate Cu cation. N462 and N494 each carry an N-linked (GlcNAc...) asparagine glycan. Intrachain disulfides connect C583–C627 and C585–C634. N680 is a glycosylation site (N-linked (GlcNAc...) asparagine).

Heterodimer. The cofactor is Cu(2+). In terms of processing, the N-terminus is blocked. As to expression, synthesized by hemocytes and released into the hemolymph plasma.

It localises to the secreted. The enzyme catalyses 2 L-dopa + O2 = 2 L-dopaquinone + 2 H2O. It catalyses the reaction L-tyrosine + O2 = L-dopaquinone + H2O. Its function is as follows. This is a copper-containing oxidase that functions in the formation of pigments such as melanins and other polyphenolic compounds. Catalyzes the rate-limiting conversions of tyrosine to DOPA, DOPA to DOPA-quinone and possibly 5,6 dihydroxyindole to indole-5'6 quinone. In Bombyx mori (Silk moth), this protein is Phenoloxidase subunit 2.